A 62-amino-acid chain; its full sequence is Photosystem II reaction center protein Z (62 aa).

2 consecutive transmembrane segments (helical) span residues 8-28 and 41-61; these read LVLL…VVLA and YTGA…NSLV.

The protein belongs to the PsbZ family. In terms of assembly, PSII is composed of 1 copy each of membrane proteins PsbA, PsbB, PsbC, PsbD, PsbE, PsbF, PsbH, PsbI, PsbJ, PsbK, PsbL, PsbM, PsbT, PsbX, PsbY, PsbZ, Psb30/Ycf12, at least 3 peripheral proteins of the oxygen-evolving complex and a large number of cofactors. It forms dimeric complexes.

It is found in the plastid. It localises to the chloroplast thylakoid membrane. In terms of biological role, may control the interaction of photosystem II (PSII) cores with the light-harvesting antenna, regulates electron flow through the 2 photosystem reaction centers. PSII is a light-driven water plastoquinone oxidoreductase, using light energy to abstract electrons from H(2)O, generating a proton gradient subsequently used for ATP formation. This Pyropia yezoensis (Susabi-nori) protein is Photosystem II reaction center protein Z.